Reading from the N-terminus, the 966-residue chain is MANRNVEKLASIDAQLRLLVPGKVSEDDKLVEYDALLLDKFLDILQDLHGEDLKEAVQQCYELSAEYEGKHDPKKLEELGSLLTSLDTGDSIVIAKAFSHMLNLANLAEELQIAYRRRIKLKSGDFADEANATTESDIEETFKRLVHKLNKSPEEVFDALKNQTVELVLTAHPTQSVRRSLLQKHGRIRNCLAQLYAKDITPDDKQELDEALHREIQAAFRTDEIRRTPPTPQDEMRAGMSYFHETIWKGVPKFLRRVDTALKNIGINERFPYNAPLIQFSSWMGGDRDGNPRVTPEVTRDVCLLARMMTSNMYFSQIEDLMIEMSMWRCNSELRVRAEELYRTARKDVKHYIEFWKRIPPNQPYRVILGDVRDKLYNTRERSRHLLVDGKSDIPDEAVYTNVEQLLEPLELCYRSLCDCGDHVIADGSLLDFLRQVSTFGLSLVKLDIRQESDRHTEVLDAITQHLGIGSYREWSEEKRQEWLLAELSGKRPLIGPDLPKTEEVKDCLDTFKVLAELPSDCFGAYIISMATSTSDVLAVELLQREYHIKHPLRVVPLFEKLADLEAAPAAMTRLFSMDWYRNRIDGKQEVMIGYSDSGKDAGRFSAAWQLYKTQEQIVKIAKEFGVKLVIFHGRGGTVGRGGGPTHLALLSQPPDTINGSLRVTVQGEVIEQSFGEEHLCFRTLQRFCAATLEHGMNPPISPRPEWRELMDQMAVVATEEYRSVVFKEPRFVEYFRLATPELEFGRMNIGSRPSKRKPSGGIESLRAIPWIFSWTQTRFHLPVWLGFGAAFKHAIQKDSKNLQMLQEMYKTWPFFRVTIDLVEMVFAKGNPGIAALNDKLLVSEDLRPFGESLRANYEETKNYLLKIAGHKDLLEGDPYLKQGIRLRDPYITTLNVCQAYTLKRIRDPNYHVTLRPHISKEYAAEPSKPADELIHLNPTSEYAPGLEDTLILTMKGIAAGMQNTG.

Serine 11 carries the phosphoserine modification. Histidine 172 is a catalytic residue. Tryptophan 283, arginine 450, and aspartate 597 together coordinate D-glucose 6-phosphate. The active site involves lysine 600. Arginine 635 contacts D-glucose 6-phosphate. Arginine 641 is an active-site residue. Arginine 641 contacts L-aspartate. D-glucose 6-phosphate is bound at residue threonine 665. An L-aspartate-binding site is contributed by glutamine 673. Residues arginine 753 and 767 to 769 (RAI) each bind D-glucose 6-phosphate. L-aspartate is bound by residues lysine 829, arginine 888, and asparagine 964.

This sequence belongs to the PEPCase type 1 family. Homotetramer. It depends on Mg(2+) as a cofactor. Expressed in mesophyll cells, but not in bundle-sheath, roots, stems and flowers.

The protein resides in the cytoplasm. The enzyme catalyses oxaloacetate + phosphate = phosphoenolpyruvate + hydrogencarbonate. It participates in photosynthesis; C4 acid pathway. With respect to regulation, 5 fold activation by the allosteric regulator glucose-6-phosphate. Low sensitivity to inhibition by L-malate and L-aspartate. Up-regulated by light-reversible phosphorylation. Forms oxaloacetate through the carboxylation of phosphoenolpyruvate (PEP). Catalyzes the first step of C4 photosynthesis. This is C4 phosphoenolpyruvate carboxylase from Flaveria trinervia (Clustered yellowtops).